A 588-amino-acid chain; its full sequence is Polyamine deacetylase HDAC10 (588 aa).

Residues 1-302 (MGTALVYHED…AGGRICAVLE (302 aa)) form a histone deacetylase region. His135 is a catalytic residue.

It belongs to the histone deacetylase family. HD type 2 subfamily. As to quaternary structure, interacts with HDAC3. Interacts with HDAC2 and NCOR2/SMRT. Interacts with HSPA8/HSC70. Interacts with MSH2.

It is found in the cytoplasm. Its subcellular location is the nucleus. The enzyme catalyses N(8)-acetylspermidine + H2O = spermidine + acetate. It carries out the reaction N-acetylputrescine + H2O = putrescine + acetate. The catalysed reaction is N-acetylcadaverine + H2O = cadaverine + acetate. It catalyses the reaction N(6)-acetyl-L-lysyl-[protein] + H2O = L-lysyl-[protein] + acetate. In terms of biological role, polyamine deacetylase (PDAC), which acts preferentially on N(8)-acetylspermidine, and also on acetylcadaverine and acetylputrescine. Exhibits attenuated catalytic activity toward N(1),N(8)-diacetylspermidine and very low activity, if any, toward N(1)-acetylspermidine. Histone deacetylase activity has been observed in vitro. Has also been shown to be involved in MSH2 deacetylation. The physiological relevance of protein/histone deacetylase activity is unclear and could be very weak. May play a role in the promotion of late stages of autophagy, possibly autophagosome-lysosome fusion and/or lysosomal exocytosis in neuroblastoma cells. May play a role in homologous recombination. May promote DNA mismatch repair. The chain is Polyamine deacetylase HDAC10 (Hdac10) from Rattus norvegicus (Rat).